We begin with the raw amino-acid sequence, 228 residues long: Auxin-responsive protein IAA14 (228 aa).

An EAR-like (transcriptional repression) motif is present at residues 8 to 12 (LCLGL). The PB1 domain occupies 110-210 (VAFVKVSMDG…SCKRLRIMKG (101 aa)).

This sequence belongs to the Aux/IAA family. Homodimers and heterodimers. Interacts with TPL. In terms of tissue distribution, preferentially expressed in roots and flowers.

The protein localises to the nucleus. In terms of biological role, aux/IAA proteins are short-lived transcriptional factors that function as repressors of early auxin response genes at low auxin concentrations. Repression is thought to result from the interaction with auxin response factors (ARFs), proteins that bind to the auxin-responsive promoter element (AuxRE). Formation of heterodimers with ARF proteins may alter their ability to modulate early auxin response genes expression. The chain is Auxin-responsive protein IAA14 (IAA14) from Arabidopsis thaliana (Mouse-ear cress).